Consider the following 121-residue polypeptide: Large ribosomal subunit protein uL14 (121 aa).

It belongs to the universal ribosomal protein uL14 family. Part of the 50S ribosomal subunit. Forms a cluster with proteins L3 and L19. In the 70S ribosome, L14 and L19 interact and together make contacts with the 16S rRNA in bridges B5 and B8.

Binds to 23S rRNA. Forms part of two intersubunit bridges in the 70S ribosome. The sequence is that of Large ribosomal subunit protein uL14 from Prochlorococcus marinus (strain MIT 9303).